The following is a 442-amino-acid chain: Mannosylglycerate hydrolase (442 aa).

Residues tyrosine 38, tryptophan 42–aspartate 45, tyrosine 90, glutamine 116, and glycine 176 contribute to the substrate site. The active-site Proton donor is aspartate 178. Substrate is bound by residues arginine 213 and tyrosine 369 to tryptophan 370. The active-site Proton acceptor is the glutamate 413.

The protein belongs to the glycosyl hydrolase 63 family. As to quaternary structure, homodimer in solution.

It carries out the reaction (2R)-2-O-(alpha-D-mannosyl)-glycerate + H2O = D-mannose + (R)-glycerate. The catalysed reaction is (2R)-2-O-(alpha-D-glucopyranosyl)-glycerate + H2O = (R)-glycerate + D-glucose. Activity is not stimulated by divalent cations and not affected in the presence of EDTA. Functionally, hydrolase that catalyzes the hydrolysis of mannosylglycerate (MG), a solute produced in response to osmotic stress in thermophiles, into mannose and glycerate. Can also hydrolyze glucosylglycerate (GG) to glucose and glycerate, with similar catalytic efficiency. Is highly specific for MG and GG, and cannot use mannosylglyceramide (MGA), glucosylglycerol, mannosylglucosylglycerate (MGG), glucosylglucosylglycerate (GGG) or trehalose as substrates. This is Mannosylglycerate hydrolase from Rubrobacter radiotolerans (Arthrobacter radiotolerans).